The primary structure comprises 239 residues: Prolyl hydroxylase EGLN3 (239 aa).

Residues 62 to 73 (AGPRAGVSKRHL) form a beta(2)beta(3) 'finger-like' loop region. The interval 88–104 (CEAISFLLSLIDRLVLY) is required for interaction with ADRB2. The Fe2OG dioxygenase domain maps to 116–214 (ERSKAMVACY…RYAMTVWYFD (99 aa)). Residues histidine 135, aspartate 137, and histidine 196 each contribute to the Fe cation site. A 2-oxoglutarate-binding site is contributed by arginine 205.

Interacts with BCL2 (via its BH4 domain); the interaction disrupts the BAX-BCL4 complex inhibiting the anti-apoptotic activity of BCL2. Interacts with WDR83; the interaction leads to almost complete elimination of HIF-mediated reporter activity. Interacts with ADRB2; the interaction hydroxylates ADRB2 facilitating its ubiquitination by the VHL-E3 ligase complex. Interacts with PAX2; the interaction targets PAX2 for destruction. Interacts with PKM; the interaction hydroxylates PKM in hypoxia. Interacts with LIMD1, WTIP and AJUBA. Fe(2+) serves as cofactor. L-ascorbate is required as a cofactor. In terms of processing, ubiquitinated by SIAH1 and/or SIAH2 in response to the unfolded protein response (UPR), leading to its degradation. Widely expressed at low levels. Expressed at higher levels in adult heart (cardiac myocytes, aortic endothelial cells and coronary artery smooth muscle), lung and placenta, and in fetal spleen, heart and skeletal muscle. Also expressed in pancreas. Localized to pancreatic acini and islet cells.

Its subcellular location is the nucleus. It localises to the cytoplasm. The catalysed reaction is L-prolyl-[protein] + 2-oxoglutarate + O2 = trans-4-hydroxy-L-prolyl-[protein] + succinate + CO2. It carries out the reaction L-prolyl-[hypoxia-inducible factor alpha subunit] + 2-oxoglutarate + O2 = trans-4-hydroxy-L-prolyl-[hypoxia-inducible factor alpha subunit] + succinate + CO2. With respect to regulation, activated in cardiovascular cells and Hela cells following exposure to hypoxia. Inhibited by polynitrogen compounds probably by chelation to Fe(2+) ions. Functionally, prolyl hydroxylase that mediates hydroxylation of proline residues in target proteins, such as PKM, TELO2, ATF4 and HIF1A. Target proteins are preferentially recognized via a LXXLAP motif. Cellular oxygen sensor that catalyzes, under normoxic conditions, the post-translational formation of 4-hydroxyproline in hypoxia-inducible factor (HIF) alpha proteins. Hydroxylates a specific proline found in each of the oxygen-dependent degradation (ODD) domains (N-terminal, NODD, and C-terminal, CODD) of HIF1A. Also hydroxylates HIF2A. Has a preference for the CODD site for both HIF1A and HIF2A. Hydroxylation on the NODD site by EGLN3 appears to require prior hydroxylation on the CODD site. Hydroxylated HIFs are then targeted for proteasomal degradation via the von Hippel-Lindau ubiquitination complex. Under hypoxic conditions, the hydroxylation reaction is attenuated allowing HIFs to escape degradation resulting in their translocation to the nucleus, heterodimerization with HIF1B, and increased expression of hypoxy-inducible genes. ELGN3 is the most important isozyme in limiting physiological activation of HIFs (particularly HIF2A) in hypoxia. Also hydroxylates PKM in hypoxia, limiting glycolysis. Under normoxia, hydroxylates and regulates the stability of ADRB2. Regulator of cardiomyocyte and neuronal apoptosis. In cardiomyocytes, inhibits the anti-apoptotic effect of BCL2 by disrupting the BAX-BCL2 complex. In neurons, has a NGF-induced proapoptotic effect, probably through regulating CASP3 activity. Also essential for hypoxic regulation of neutrophilic inflammation. Plays a crucial role in DNA damage response (DDR) by hydroxylating TELO2, promoting its interaction with ATR which is required for activation of the ATR/CHK1/p53 pathway. Also mediates hydroxylation of ATF4, leading to decreased protein stability of ATF4. This is Prolyl hydroxylase EGLN3 from Homo sapiens (Human).